A 482-amino-acid polypeptide reads, in one-letter code: Proline--tRNA ligase (482 aa).

This sequence belongs to the class-II aminoacyl-tRNA synthetase family. ProS type 3 subfamily. In terms of assembly, homodimer.

The protein localises to the cytoplasm. The enzyme catalyses tRNA(Pro) + L-proline + ATP = L-prolyl-tRNA(Pro) + AMP + diphosphate. Its function is as follows. Catalyzes the attachment of proline to tRNA(Pro) in a two-step reaction: proline is first activated by ATP to form Pro-AMP and then transferred to the acceptor end of tRNA(Pro). This chain is Proline--tRNA ligase, found in Mycoplasmopsis synoviae (strain 53) (Mycoplasma synoviae).